The chain runs to 128 residues: Aspartate 1-decarboxylase (128 aa).

The active-site Schiff-base intermediate with substrate; via pyruvic acid is S25. S25 is subject to Pyruvic acid (Ser). T57 contacts substrate. Y58 functions as the Proton donor in the catalytic mechanism. Position 73-75 (73-75 (GAA)) interacts with substrate.

This sequence belongs to the PanD family. In terms of assembly, heterooctamer of four alpha and four beta subunits. It depends on pyruvate as a cofactor. Is synthesized initially as an inactive proenzyme, which is activated by self-cleavage at a specific serine bond to produce a beta-subunit with a hydroxyl group at its C-terminus and an alpha-subunit with a pyruvoyl group at its N-terminus.

It localises to the cytoplasm. The enzyme catalyses L-aspartate + H(+) = beta-alanine + CO2. The protein operates within cofactor biosynthesis; (R)-pantothenate biosynthesis; beta-alanine from L-aspartate: step 1/1. Catalyzes the pyruvoyl-dependent decarboxylation of aspartate to produce beta-alanine. The polypeptide is Aspartate 1-decarboxylase (Chlorobium luteolum (strain DSM 273 / BCRC 81028 / 2530) (Pelodictyon luteolum)).